Reading from the N-terminus, the 115-residue chain is NADH-ubiquinone oxidoreductase chain 3 (115 aa).

3 helical membrane passes run 4-24 (LLTMLTNITLSTLLISIAFWL), 55-75 (FFLVAITFLLFDLEIALLLPI), and 84-104 (INTMTLTAFILVSILALGLAY).

The protein belongs to the complex I subunit 3 family. Core subunit of respiratory chain NADH dehydrogenase (Complex I) which is composed of 45 different subunits. Interacts with TMEM186. Interacts with TMEM242.

The protein localises to the mitochondrion inner membrane. The enzyme catalyses a ubiquinone + NADH + 5 H(+)(in) = a ubiquinol + NAD(+) + 4 H(+)(out). Functionally, core subunit of the mitochondrial membrane respiratory chain NADH dehydrogenase (Complex I) which catalyzes electron transfer from NADH through the respiratory chain, using ubiquinone as an electron acceptor. Essential for the catalytic activity of complex I. The protein is NADH-ubiquinone oxidoreductase chain 3 of Neotoma lepida (Desert woodrat).